The following is a 487-amino-acid chain: 3-octaprenyl-4-hydroxybenzoate carboxy-lyase (487 aa).

Mn(2+) is bound at residue Asn-172. Prenylated FMN contacts are provided by residues 175-177, 189-191, and 194-195; these read IYR, RWL, and RG. Position 238 (Glu-238) interacts with Mn(2+). Asp-287 (proton donor) is an active-site residue.

Belongs to the UbiD family. Homohexamer. Requires prenylated FMN as cofactor. It depends on Mn(2+) as a cofactor.

The protein resides in the cell membrane. The enzyme catalyses a 4-hydroxy-3-(all-trans-polyprenyl)benzoate + H(+) = a 2-(all-trans-polyprenyl)phenol + CO2. Its pathway is cofactor biosynthesis; ubiquinone biosynthesis. Catalyzes the decarboxylation of 3-octaprenyl-4-hydroxy benzoate to 2-octaprenylphenol, an intermediate step in ubiquinone biosynthesis. This Nitrosomonas eutropha (strain DSM 101675 / C91 / Nm57) protein is 3-octaprenyl-4-hydroxybenzoate carboxy-lyase.